The sequence spans 490 residues: Glycogen synthase kinase-3 alpha (490 aa).

Residues 1-15 show a composition bias toward gly residues; that stretch reads MSGGGPSGGGPGGSG. Positions 1–97 are disordered; that stretch reads MSGGGPSGGG…PPGVKLGRDS (97 aa). An N-acetylserine modification is found at Ser-2. Position 2 is a phosphoserine (Ser-2). A Phosphoserine; by PKB/AKT1 modification is found at Ser-21. A compositionally biased stretch (gly residues) spans 25–82; it reads PGGGGGGGGGGPGGSASGPGGTGGGKASVGAMGGGVGASSSGGGPSGSGGGGSGGPGA. A phosphoserine mark is found at Ser-72, Ser-77, and Ser-97. One can recognise a Protein kinase domain in the interval 119–404; that stretch reads YTDIKVIGNG…PLEACAHSFF (286 aa). ATP contacts are provided by residues 125–133 and Lys-148; that span reads IGNGSFGVV. Asp-244 serves as the catalytic Proton acceptor. The residue at position 279 (Tyr-279) is a Phosphotyrosine. Positions 451-490 are disordered; sequence GPASPLTTSYNPSSQALTEAQTGQDWQPSDATTATLASSS. The segment covering 455–480 has biased composition (polar residues); the sequence is PLTTSYNPSSQALTEAQTGQDWQPSD. Low complexity predominate over residues 481-490; that stretch reads ATTATLASSS.

This sequence belongs to the protein kinase superfamily. CMGC Ser/Thr protein kinase family. GSK-3 subfamily. Monomer. Interacts with AXIN1 and CTNNB1/beta-catenin. Interacts with ARRB2. Interacts with CTNND2. Interacts with LMBR1L. Interacts with DDX3X. Interacts with TNFRSF10B. Phosphorylated by AKT1 at Ser-21: upon insulin-mediated signaling, the activated PKB/AKT1 protein kinase phosphorylates and deactivates GSK3A, resulting in the dephosphorylation and activation of GYS1. Activated by phosphorylation at Tyr-279.

The catalysed reaction is L-seryl-[tau protein] + ATP = O-phospho-L-seryl-[tau protein] + ADP + H(+). The enzyme catalyses L-threonyl-[tau protein] + ATP = O-phospho-L-threonyl-[tau protein] + ADP + H(+). It catalyses the reaction L-seryl-[protein] + ATP = O-phospho-L-seryl-[protein] + ADP + H(+). It carries out the reaction L-threonyl-[protein] + ATP = O-phospho-L-threonyl-[protein] + ADP + H(+). Its activity is regulated as follows. Activated by phosphorylation at Tyr-279. In response to insulin, inhibited by phosphorylation at Ser-21 by PKB/AKT1; phosphorylation at this site causes a conformational change, preventing access of substrates to the active site. Inhibited by lithium. Functionally, constitutively active protein kinase that acts as a negative regulator in the hormonal control of glucose homeostasis, Wnt signaling and regulation of transcription factors and microtubules, by phosphorylating and inactivating glycogen synthase (GYS1 or GYS2), CTNNB1/beta-catenin, APC and AXIN1. Requires primed phosphorylation of the majority of its substrates. Contributes to insulin regulation of glycogen synthesis by phosphorylating and inhibiting GYS1 activity and hence glycogen synthesis. Regulates glycogen metabolism in liver, but not in muscle. May also mediate the development of insulin resistance by regulating activation of transcription factors. In Wnt signaling, regulates the level and transcriptional activity of nuclear CTNNB1/beta-catenin. Facilitates amyloid precursor protein (APP) processing and the generation of APP-derived amyloid plaques found in Alzheimer disease. May be involved in the regulation of replication in pancreatic beta-cells. Is necessary for the establishment of neuronal polarity and axon outgrowth. Through phosphorylation of the anti-apoptotic protein MCL1, may control cell apoptosis in response to growth factors deprivation. Acts as a regulator of autophagy by mediating phosphorylation of KAT5/TIP60 under starvation conditions, activating KAT5/TIP60 acetyltransferase activity and promoting acetylation of key autophagy regulators, such as ULK1 and RUBCNL/Pacer. Negatively regulates extrinsic apoptotic signaling pathway via death domain receptors. Promotes the formation of an anti-apoptotic complex, made of DDX3X, BRIC2 and GSK3B, at death receptors, including TNFRSF10B. The anti-apoptotic function is most effective with weak apoptotic signals and can be overcome by stronger stimulation. The chain is Glycogen synthase kinase-3 alpha (Gsk3a) from Mus musculus (Mouse).